Here is a 407-residue protein sequence, read N- to C-terminus: Na(+)-translocating NADH-quinone reductase subunit F (407 aa).

The chain crosses the membrane as a helical span at residues 3–23 (ITLGIAMFTVIVLALAVIILF). One can recognise a 2Fe-2S ferredoxin-type domain in the interval 32–126 (GDITIEINDD…SMKVELPEEV (95 aa)). Residues C69, C75, C78, and C110 each coordinate [2Fe-2S] cluster. Residues 129–269 (VKKWECTVIS…SGPFGEFFAK (141 aa)) form the FAD-binding FR-type domain. The interval 272 to 389 (DAEMVFVGGG…PIMNASVIKM (118 aa)) is catalytic.

Belongs to the NqrF family. As to quaternary structure, composed of six subunits; NqrA, NqrB, NqrC, NqrD, NqrE and NqrF. [2Fe-2S] cluster serves as cofactor. Requires FAD as cofactor.

It is found in the cell inner membrane. The catalysed reaction is a ubiquinone + n Na(+)(in) + NADH + H(+) = a ubiquinol + n Na(+)(out) + NAD(+). Functionally, NQR complex catalyzes the reduction of ubiquinone-1 to ubiquinol by two successive reactions, coupled with the transport of Na(+) ions from the cytoplasm to the periplasm. The first step is catalyzed by NqrF, which accepts electrons from NADH and reduces ubiquinone-1 to ubisemiquinone by a one-electron transfer pathway. The sequence is that of Na(+)-translocating NADH-quinone reductase subunit F from Pasteurella multocida (strain Pm70).